A 503-amino-acid polypeptide reads, in one-letter code: MYVMKVVGKTTTTHFTFESLEKIRFGEYVIAKNVDGRDVLGVIKNVVADVEKFVGEVKVIGVLDGNKIIPNRTPILPNSEVRLCDDEILNNIYLTPDGLNIGHLLTRDNVRVYLDTNKLVSRHFAILSITGGGKSNTASVLCRELAKKNGTVIMIDPHGEYISLYHEDMEGKIKVINPIINPVLLAPSEFANLIGIGDNEIEKRVYVEFAYHTVKHECPDAKGIEFIEKIENLLYEWSKIASVGWEIKYYNPLRRNYDRRKLEKEDFVILMSLIDTISKFKLDYALNIGDRDVIEEFEIGKINIVNLSGLEIPQMVTFVGFIAKHLLLKRITYLKSLKDVYSINEEIRRVAQSNLNIIESHYKVVTKPVLLIVEEAHIFIPVNEQNSASLWLGKIAREGRKFGVGLGLVSQRPKQLHPDVLSQTNTKIILKIVEPEDQKYIQRASEELGEDLVKDLASLGIGEAVIVGAAISLPSIVKIDKFDGVYGGKDINIVGEWMGLDDW.

ATP is bound by residues arginine 122, 131 to 136 (GGGKSN), and 478 to 479 (KI).

This sequence belongs to the HerA family.

It carries out the reaction Couples ATP hydrolysis with the unwinding of duplex DNA at the replication fork by translocating in the 5'-3' direction. This creates two antiparallel DNA single strands (ssDNA). The leading ssDNA polymer is the template for DNA polymerase III holoenzyme which synthesizes a continuous strand.. The enzyme catalyses ATP + H2O = ADP + phosphate + H(+). It catalyses the reaction Couples ATP hydrolysis with the unwinding of duplex DNA by translocating in the 3'-5' direction.. Functionally, involved in DNA double-strand break (DSB) repair. Probably acts with NurA to stimulate resection of the 5' strand and produce the long 3' single-strand that is required for RadA loading. Has DNA-dependent ATPase activity and DNA helicase activity. This chain is Probable DNA double-strand break repair helicase HerA, found in Methanocaldococcus jannaschii (strain ATCC 43067 / DSM 2661 / JAL-1 / JCM 10045 / NBRC 100440) (Methanococcus jannaschii).